A 557-amino-acid polypeptide reads, in one-letter code: Organic cation/carnitine transporter 2 (557 aa).

Residues 1-20 (MRDYDEVTAFLGEWGPFQRL) lie on the Cytoplasmic side of the membrane. A helical membrane pass occupies residues 21–41 (IFFLLSASIIPNGFNGMSIVF). The Extracellular segment spans residues 42–142 (LAGTPEHRCL…DLVCKDDWKA (101 aa)). Residues Asn57, Asn64, and Asn91 are each glycosylated (N-linked (GlcNAc...) asparagine). A helical transmembrane segment spans residues 143–163 (PLTTSLFFVGVLMGSFISGQL). Residues 164–172 (SDRFGRKNV) are Cytoplasmic-facing. The chain crosses the membrane as a helical span at residues 173 to 193 (LFLTMGMQTGFSFLQVFSVNF). Residues 194-197 (EMFT) are Extracellular-facing. A helical transmembrane segment spans residues 198–218 (VLFVLVGMGQISNYVAAFVLG). 218–225 (GTEILSKS) contributes to the ATP binding site. Topologically, residues 219 to 232 (TEILSKSIRIIFAT) are cytoplasmic. The chain crosses the membrane as a helical span at residues 233–253 (LGVCIFYAFGFMVLPLFAYFI). Residues 254-257 (RDWR) are Extracellular-facing. The helical transmembrane segment at 258 to 278 (MLLLALTVPGVLCGALWWFIP) threads the bilayer. Over 279 to 341 (ESPRWLISQG…YDLIRTRNIR (63 aa)) the chain is Cytoplasmic. Residues 342–362 (VITIMSIILWLTISVGYFGLS) traverse the membrane as a helical segment. Residues 363–373 (LDTPNLHGDIY) lie on the Extracellular side of the membrane. A helical transmembrane segment spans residues 374–394 (VNCFLLAAVEVPAYVLAWLLL). Over 395–406 (QYLPRRYSISAA) the chain is Cytoplasmic. A helical transmembrane segment spans residues 407–427 (LFLGGSVLLFMQLVPSELFYL). At 428–430 (STA) the chain is on the extracellular side. A helical membrane pass occupies residues 431-451 (LVMVGKFGITSAYSMVYVYTA). Over 452-462 (ELYPTVVRNMG) the chain is Cytoplasmic. The helical transmembrane segment at 463–483 (VGVSSTASRLGSILSPYFVYL) threads the bilayer. At 484 to 488 (GAYDR) the chain is on the extracellular side. Residue Tyr486 is modified to Phosphotyrosine. The chain crosses the membrane as a helical span at residues 489 to 509 (FLPYILMGSLTILTAILTLFF). Residues 510–557 (PESFGVPLPDTIDQMLRVKGIKQWQIQSQTRMQKDGEESPTVLKSTAF) lie on the Cytoplasmic side of the membrane. Ser548 carries the post-translational modification Phosphoserine. Phosphothreonine is present on Thr550.

The protein belongs to the major facilitator (TC 2.A.1) superfamily. Organic cation transporter (TC 2.A.1.19) family. Interacts with PDZK1. In terms of tissue distribution, widely expressed. Expressed in kidney, liver and testis. Expressed at the brush border of the small, large intestine and colon (at protein level).

Its subcellular location is the apical cell membrane. It is found in the basal cell membrane. The protein resides in the cell membrane. It catalyses the reaction (R)-carnitine(out) + Na(+)(out) = (R)-carnitine(in) + Na(+)(in). The catalysed reaction is glycine betaine(out) + Na(+)(out) = glycine betaine(in) + Na(+)(in). It carries out the reaction glycine betaine(out) + (R)-carnitine(in) = glycine betaine(in) + (R)-carnitine(out). The enzyme catalyses O-butanoyl-(R)-carnitine(out) + Na(+)(out) = O-butanoyl-(R)-carnitine(in) + Na(+)(in). It catalyses the reaction O-acetyl-(R)-carnitine(out) + Na(+)(out) = O-acetyl-(R)-carnitine(in) + Na(+)(in). The catalysed reaction is O-propanoyl-(R)-carnitine(out) + Na(+)(out) = O-propanoyl-(R)-carnitine(in) + Na(+)(in). It carries out the reaction (S)-carnitine(out) + Na(+)(out) = (S)-carnitine(in) + Na(+)(in). The enzyme catalyses an O-acyl-(R)-carnitine(out) + Na(+)(out) = an O-acyl-(R)-carnitine(in) + Na(+)(in). It catalyses the reaction L-glutamyl-L-arginyl-glycyl-L-methionyl-L-threonine(out) + Na(+)(out) = L-glutamyl-L-arginyl-glycyl-L-methionyl-L-threonine(in) + Na(+)(in). The catalysed reaction is N,N-dimethylglycine(out) + Na(+)(out) = N,N-dimethylglycine(in) + Na(+)(in). With respect to regulation, inhibited by emetine, quinidine and verapamil. The IC(50) of emetine is 4.2 uM. Not inhibited by valproic acid. Transport of (R)-carnitine is stimulated by cholesterol in the plasma membrane. Functionally, sodium-ion dependent, high affinity carnitine transporter. Involved in the active cellular uptake of carnitine. Transports one sodium ion with one molecule of carnitine. Also transports organic cations such as tetraethylammonium (TEA) without the involvement of sodium. Also relative uptake activity ratio of carnitine to TEA is 11.3. May also contribute to regulate the transport of organic compounds in testis across the blood-testis-barrier. The chain is Organic cation/carnitine transporter 2 from Mus musculus (Mouse).